A 485-amino-acid chain; its full sequence is NADH-quinone oxidoreductase subunit N (485 aa).

14 helical membrane-spanning segments follow: residues 8 to 28, 35 to 55, 71 to 91, 105 to 125, 127 to 147, 159 to 179, 203 to 223, 235 to 255, 271 to 291, 297 to 317, 326 to 346, 373 to 393, 408 to 430, and 455 to 475; these read LIAL…MLSI, FLNA…LWFV, GFAM…CTFA, FYLL…ANHL, SLFL…GYAF, YTIL…LVYA, LLAG…LVPF, PAPV…GVVM, VVLA…ALSQ, LLGY…IALQ, VGVY…VVSL, AAVM…LGFI, WWLV…RVAV, and IVVL…QPLI.

This sequence belongs to the complex I subunit 2 family. As to quaternary structure, NDH-1 is composed of 13 different subunits. Subunits NuoA, H, J, K, L, M, N constitute the membrane sector of the complex.

The protein localises to the cell inner membrane. It catalyses the reaction a quinone + NADH + 5 H(+)(in) = a quinol + NAD(+) + 4 H(+)(out). Its function is as follows. NDH-1 shuttles electrons from NADH, via FMN and iron-sulfur (Fe-S) centers, to quinones in the respiratory chain. The immediate electron acceptor for the enzyme in this species is believed to be ubiquinone. Couples the redox reaction to proton translocation (for every two electrons transferred, four hydrogen ions are translocated across the cytoplasmic membrane), and thus conserves the redox energy in a proton gradient. The sequence is that of NADH-quinone oxidoreductase subunit N from Escherichia coli O6:K15:H31 (strain 536 / UPEC).